A 284-amino-acid polypeptide reads, in one-letter code: Putative ABC transporter ATP-binding protein MG468.1 homolog (284 aa).

The ABC transporter domain maps to 53–284 (VLFKGVCKAV…PKTINEINWV (232 aa)). 89–96 (GKSGSGKT) is an ATP binding site.

It belongs to the ABC transporter superfamily.

The chain is Putative ABC transporter ATP-binding protein MG468.1 homolog from Mycoplasma pneumoniae (strain ATCC 29342 / M129 / Subtype 1) (Mycoplasmoides pneumoniae).